A 301-amino-acid chain; its full sequence is Probable alpha-L-glutamate ligase (301 aa).

Residues 104–287 enclose the ATP-grasp domain; it reads LQILARKGIG…VAGKIIEYLE (184 aa). Residues lysine 141, 178 to 179, aspartate 187, and 211 to 213 contribute to the ATP site; these read EY and RSN. Positions 248, 260, and 262 each coordinate Mg(2+). Mn(2+)-binding residues include aspartate 248, glutamate 260, and asparagine 262.

Belongs to the RimK family. The cofactor is Mg(2+). Mn(2+) serves as cofactor.

The sequence is that of Probable alpha-L-glutamate ligase from Picosynechococcus sp. (strain ATCC 27264 / PCC 7002 / PR-6) (Agmenellum quadruplicatum).